The sequence spans 346 residues: Probable choline kinase 1 (346 aa).

ATP is bound by residues Arg-73, Gln-210, and Asp-227.

The protein belongs to the choline/ethanolamine kinase family. As to expression, expressed in roots. Expressed at low levels in cauline leaves and flowers.

The catalysed reaction is choline + ATP = phosphocholine + ADP + H(+). Its pathway is phospholipid metabolism; phosphatidylcholine biosynthesis; phosphocholine from choline: step 1/1. Involved in phospholipid biosynthesis. Catalyzes the first step in phosphatidylcholine biosynthesis. In Arabidopsis thaliana (Mouse-ear cress), this protein is Probable choline kinase 1 (CK1).